A 733-amino-acid polypeptide reads, in one-letter code: mRNA 3'-end-processing protein rna14 (733 aa).

Residues 1 to 45 (MNSDDNVEADASSNIIKDSPKIKEQENTSTVNESDVLATSTTASS) are disordered. The span at 27–45 (NTSTVNESDVLATSTTASS) shows a compositional bias: polar residues. 6 HAT repeats span residues 85 to 117 (GKHE…SELA), 119 to 150 (NDFH…YIRR), 158 to 193 (QSRS…FLRS), 204 to 237 (QKLD…FENS), 269 to 302 (EGLR…WEQS), and 312 to 344 (MLQN…YFLS). The span at 404–414 (DSKASSSSESS) shows a compositional bias: low complexity. The tract at residues 404 to 425 (DSKASSSSESSTDGNPQEKKLP) is disordered. The stretch at 523–557 (NDETNARALFEKAIPRIAADEAKPIYQKWLDYESN) is one HAT 7 repeat.

It is found in the nucleus. The protein resides in the cytoplasm. In terms of biological role, component of the cleavage factor IA (CFIA) complex, which is involved in the endonucleolytic cleavage during polyadenylation-dependent pre-mRNA 3'-end formation. This Schizosaccharomyces pombe (strain 972 / ATCC 24843) (Fission yeast) protein is mRNA 3'-end-processing protein rna14 (rna14).